The following is a 351-amino-acid chain: Biotin synthase (351 aa).

A Radical SAM core domain is found at 44–262 (NRVQVSTLLS…LAVARILMPQ (219 aa)). 3 residues coordinate [4Fe-4S] cluster: Cys59, Cys63, and Cys66. [2Fe-2S] cluster contacts are provided by Cys103, Cys134, Cys194, and Arg266.

This sequence belongs to the radical SAM superfamily. Biotin synthase family. As to quaternary structure, homodimer. Requires [4Fe-4S] cluster as cofactor. [2Fe-2S] cluster is required as a cofactor.

The catalysed reaction is (4R,5S)-dethiobiotin + (sulfur carrier)-SH + 2 reduced [2Fe-2S]-[ferredoxin] + 2 S-adenosyl-L-methionine = (sulfur carrier)-H + biotin + 2 5'-deoxyadenosine + 2 L-methionine + 2 oxidized [2Fe-2S]-[ferredoxin]. The protein operates within cofactor biosynthesis; biotin biosynthesis; biotin from 7,8-diaminononanoate: step 2/2. In terms of biological role, catalyzes the conversion of dethiobiotin (DTB) to biotin by the insertion of a sulfur atom into dethiobiotin via a radical-based mechanism. The sequence is that of Biotin synthase from Pseudomonas fluorescens (strain ATCC BAA-477 / NRRL B-23932 / Pf-5).